The primary structure comprises 131 residues: Profilin (131 aa).

It belongs to the profilin family. Occurs in many kinds of cells as a complex with monomeric actin in a 1:1 ratio.

It is found in the cytoplasm. Its subcellular location is the cytoskeleton. Functionally, binds to actin and affects the structure of the cytoskeleton. At high concentrations, profilin prevents the polymerization of actin, whereas it enhances it at low concentrations. By binding to PIP2, it inhibits the formation of IP3 and DG. In Litchi chinensis (Lychee), this protein is Profilin.